Reading from the N-terminus, the 62-residue chain is Large ribosomal subunit protein eL24 (62 aa).

Zn(2+) contacts are provided by Cys6, Cys9, Cys32, and Cys36. A C4-type zinc finger spans residues Cys6–Cys36.

This sequence belongs to the eukaryotic ribosomal protein eL24 family. In terms of assembly, part of the 50S ribosomal subunit. Forms a cluster with proteins L3 and L14. Zn(2+) is required as a cofactor.

Binds to the 23S rRNA. This chain is Large ribosomal subunit protein eL24, found in Methanococcus maripaludis (strain C5 / ATCC BAA-1333).